Consider the following 105-residue polypeptide: MVMTKAIRMHVAVRLQWIHPRNAFIVLLISNICYLMTMCRIETHLLMTPPLNKTICARKHSYLLLRIFLKTLSRMPAQIFQFSWHHPHTACLKCTIQKMREKANT.

This is an uncharacterized protein from Saccharomyces cerevisiae (strain ATCC 204508 / S288c) (Baker's yeast).